Here is a 179-residue protein sequence, read N- to C-terminus: Transcription factor E (179 aa).

The region spanning 1–102 (MAKKKVKYTF…YWRFDSRKAA (102 aa)) is the HTH TFE/IIEalpha-type domain.

Belongs to the TFE family. Monomer. Interaction with RNA polymerase subunits RpoF and RpoE is necessary for Tfe stimulatory transcription activity. Able to interact with Tbp and RNA polymerase in the absence of DNA promoter. Interacts both with the preinitiation and elongation complexes.

Transcription factor that plays a role in the activation of archaeal genes transcribed by RNA polymerase. Facilitates transcription initiation by enhancing TATA-box recognition by TATA-box-binding protein (Tbp), and transcription factor B (Tfb) and RNA polymerase recruitment. Not absolutely required for transcription in vitro, but particularly important in cases where Tbp or Tfb function is not optimal. It dynamically alters the nucleic acid-binding properties of RNA polymerases by stabilizing the initiation complex and destabilizing elongation complexes. Seems to translocate with the RNA polymerase following initiation and acts by binding to the non template strand of the transcription bubble in elongation complexes. This chain is Transcription factor E, found in Methanosphaera stadtmanae (strain ATCC 43021 / DSM 3091 / JCM 11832 / MCB-3).